Consider the following 932-residue polypeptide: Protein translocase subunit SecA (932 aa).

ATP is bound by residues Gln-86, 104-108, and Asp-494; that span reads GEGKT. The tract at residues 857-932 is disordered; sequence EDAGAEAHAS…KPAPKRKKRR (76 aa). The span at 905–915 shows a compositional bias: polar residues; that stretch reads TAGSAGDSNLP. The span at 920–932 shows a compositional bias: basic residues; sequence KTNKPAPKRKKRR.

It belongs to the SecA family. Monomer and homodimer. Part of the essential Sec protein translocation apparatus which comprises SecA, SecYEG and auxiliary proteins SecDF. Other proteins may also be involved.

It localises to the cell membrane. It is found in the cytoplasm. The catalysed reaction is ATP + H2O + cellular proteinSide 1 = ADP + phosphate + cellular proteinSide 2.. Part of the Sec protein translocase complex. Interacts with the SecYEG preprotein conducting channel. Has a central role in coupling the hydrolysis of ATP to the transfer of proteins into and across the cell membrane, serving as an ATP-driven molecular motor driving the stepwise translocation of polypeptide chains across the membrane. This chain is Protein translocase subunit SecA, found in Renibacterium salmoninarum (strain ATCC 33209 / DSM 20767 / JCM 11484 / NBRC 15589 / NCIMB 2235).